The sequence spans 525 residues: Putative ankyrin repeat protein FPV228 (525 aa).

ANK repeat units lie at residues 39-71, 72-122, 123-152, 156-185, 190-226, 227-254, 258-287, 291-320, and 324-353; these read HPDN…TRDI, LGNT…ACNN, LNQT…KVNI, YGNT…DVNI, YWYS…TRCR, LNTT…DINA, NDNA…DVNM, RGKT…NPNI, and IMNT…DINH.

The chain is Putative ankyrin repeat protein FPV228 from Fowlpox virus (strain NVSL) (FPV).